A 264-amino-acid polypeptide reads, in one-letter code: Thymidylate synthase (264 aa).

DUMP-binding positions include R21 and 126-127; that span reads RR. C146 functions as the Nucleophile in the catalytic mechanism. Residues 166–169, N177, and 207–209 each bind dUMP; these read RSAD and HLY. A (6R)-5,10-methylene-5,6,7,8-tetrahydrofolate-binding site is contributed by D169. A (6R)-5,10-methylene-5,6,7,8-tetrahydrofolate-binding site is contributed by A263.

This sequence belongs to the thymidylate synthase family. Bacterial-type ThyA subfamily. As to quaternary structure, homodimer.

The protein resides in the cytoplasm. It carries out the reaction dUMP + (6R)-5,10-methylene-5,6,7,8-tetrahydrofolate = 7,8-dihydrofolate + dTMP. It functions in the pathway pyrimidine metabolism; dTTP biosynthesis. Functionally, catalyzes the reductive methylation of 2'-deoxyuridine-5'-monophosphate (dUMP) to 2'-deoxythymidine-5'-monophosphate (dTMP) while utilizing 5,10-methylenetetrahydrofolate (mTHF) as the methyl donor and reductant in the reaction, yielding dihydrofolate (DHF) as a by-product. This enzymatic reaction provides an intracellular de novo source of dTMP, an essential precursor for DNA biosynthesis. This Nitrobacter hamburgensis (strain DSM 10229 / NCIMB 13809 / X14) protein is Thymidylate synthase.